A 784-amino-acid polypeptide reads, in one-letter code: Ent-kaurene synthase 1, chloroplastic (784 aa).

Residues 1–28 (MNLSLCIASPLLTKSSRPTALSAIHTAS) constitute a chloroplast transit peptide. Residues aspartate 528, aspartate 532, asparagine 672, and glutamate 680 each coordinate Mg(2+). A DDXXD motif motif is present at residues 528–532 (DDFFD).

This sequence belongs to the terpene synthase family. Mg(2+) is required as a cofactor. Accumulates in leaves.

It is found in the plastid. The protein localises to the chloroplast. It carries out the reaction ent-copalyl diphosphate = ent-kaur-16-ene + diphosphate. The protein operates within secondary metabolite biosynthesis; terpenoid biosynthesis. It participates in plant hormone biosynthesis; gibberellin biosynthesis. Involved in the biosynthesis of ent-kaurene diterpenoids natural products such as oridonin, miltiradiene, eriocalyxin B and nezukol, known to exhibit antitumor, anti-inflammatory and antibacterial activities, and in the production of gibberellins phytohormones. Catalyzes the conversion of ent-copalyl diphosphate (ent-CPP) to ent-kaurene. The polypeptide is Ent-kaurene synthase 1, chloroplastic (Stevia rebaudiana (Stevia)).